Here is a 209-residue protein sequence, read N- to C-terminus: Protein GrpE (209 aa).

Polar residues predominate over residues 1 to 13 (MSNDSSKAKQNQV). Residues 1–33 (MSNDSSKAKQNQVDEAVEGEILTESEVETGNDE) are disordered. Positions 15-31 (EAVEGEILTESEVETGN) are enriched in acidic residues.

Belongs to the GrpE family. As to quaternary structure, homodimer.

The protein localises to the cytoplasm. Participates actively in the response to hyperosmotic and heat shock by preventing the aggregation of stress-denatured proteins, in association with DnaK and GrpE. It is the nucleotide exchange factor for DnaK and may function as a thermosensor. Unfolded proteins bind initially to DnaJ; upon interaction with the DnaJ-bound protein, DnaK hydrolyzes its bound ATP, resulting in the formation of a stable complex. GrpE releases ADP from DnaK; ATP binding to DnaK triggers the release of the substrate protein, thus completing the reaction cycle. Several rounds of ATP-dependent interactions between DnaJ, DnaK and GrpE are required for fully efficient folding. The chain is Protein GrpE from Shewanella woodyi (strain ATCC 51908 / MS32).